The primary structure comprises 204 residues: Glycerol-3-phosphate acyltransferase (204 aa).

4 consecutive transmembrane segments (helical) span residues 8-28 (NAQF…LLLA), 76-96 (GVLV…LWGI), 122-142 (MGVM…VWAL), and 166-186 (FILH…VLLY).

This sequence belongs to the PlsY family. Probably interacts with PlsX.

Its subcellular location is the cell inner membrane. The catalysed reaction is an acyl phosphate + sn-glycerol 3-phosphate = a 1-acyl-sn-glycero-3-phosphate + phosphate. Its pathway is lipid metabolism; phospholipid metabolism. Catalyzes the transfer of an acyl group from acyl-phosphate (acyl-PO(4)) to glycerol-3-phosphate (G3P) to form lysophosphatidic acid (LPA). This enzyme utilizes acyl-phosphate as fatty acyl donor, but not acyl-CoA or acyl-ACP. The polypeptide is Glycerol-3-phosphate acyltransferase (Sulfurimonas denitrificans (strain ATCC 33889 / DSM 1251) (Thiomicrospira denitrificans (strain ATCC 33889 / DSM 1251))).